We begin with the raw amino-acid sequence, 363 residues long: Peptide chain release factor 1 (363 aa).

An N5-methylglutamine modification is found at Q237. Over residues E284–R296 the composition is skewed to basic and acidic residues. Positions E284–R305 are disordered.

The protein belongs to the prokaryotic/mitochondrial release factor family. Methylated by PrmC. Methylation increases the termination efficiency of RF1.

The protein localises to the cytoplasm. Its function is as follows. Peptide chain release factor 1 directs the termination of translation in response to the peptide chain termination codons UAG and UAA. This chain is Peptide chain release factor 1, found in Shewanella baltica (strain OS195).